The following is a 406-amino-acid chain: Elongation factor Tu-A (406 aa).

The tr-type G domain occupies 10 to 215 (KPHVNVGTIG…AIDEYIPTPV (206 aa)). The segment at 19–26 (GHVDHGKT) is G1. 19–26 (GHVDHGKT) serves as a coordination point for GTP. T26 is a Mg(2+) binding site. The interval 61–65 (GITIN) is G2. A G3 region spans residues 82–85 (DCPG). Residues 82–86 (DCPGH) and 137–140 (NKVD) contribute to the GTP site. Residues 137-140 (NKVD) are G4. The interval 175 to 177 (SAL) is G5. A Phosphothreonine modification is found at T395.

This sequence belongs to the TRAFAC class translation factor GTPase superfamily. Classic translation factor GTPase family. EF-Tu/EF-1A subfamily. Monomer. Binds to the 70S ribosome, contacts tmRNA during trans-translation. Post-translationally, phosphorylated on a threonine.

Its subcellular location is the cytoplasm. It carries out the reaction GTP + H2O = GDP + phosphate + H(+). Its function is as follows. GTP hydrolase that promotes the GTP-dependent binding of aminoacyl-tRNA to the A-site of ribosomes during protein biosynthesis. Functionally, EF-Tu-GDP binds to the acceptor arm of tmRNA by interacting with its acceptor arm, suggesting that GTP hydrolysis by EF-Tu is essential for tmRNA function. Protects glycyl-tRNA(Gly) from hydrolysis by E.coli D-aminoacyl-tRNA deacylase (dtd). The sequence is that of Elongation factor Tu-A from Thermus thermophilus (strain ATCC 27634 / DSM 579 / HB8).